Consider the following 338-residue polypeptide: Phenylalanine--tRNA ligase alpha subunit (338 aa).

Glutamate 253 serves as a coordination point for Mg(2+).

The protein belongs to the class-II aminoacyl-tRNA synthetase family. Phe-tRNA synthetase alpha subunit type 1 subfamily. As to quaternary structure, tetramer of two alpha and two beta subunits. Mg(2+) serves as cofactor.

It is found in the cytoplasm. The enzyme catalyses tRNA(Phe) + L-phenylalanine + ATP = L-phenylalanyl-tRNA(Phe) + AMP + diphosphate + H(+). The chain is Phenylalanine--tRNA ligase alpha subunit from Geotalea uraniireducens (strain Rf4) (Geobacter uraniireducens).